An 873-amino-acid polypeptide reads, in one-letter code: Protein translocase subunit SecA (873 aa).

ATP-binding positions include Gln-85, Gly-103–Thr-107, and Asp-492. A compositionally biased stretch (basic and acidic residues) spans Arg-835–Asp-856. Residues Arg-835–Ala-873 form a disordered region. The Zn(2+) site is built by Cys-857, Cys-859, Cys-868, and Cys-869. Over residues Lys-863–Ala-873 the composition is skewed to basic residues.

Belongs to the SecA family. As to quaternary structure, monomer and homodimer. Part of the essential Sec protein translocation apparatus which comprises SecA, SecYEG and auxiliary proteins SecDF. Other proteins may also be involved. Requires Zn(2+) as cofactor.

Its subcellular location is the cell membrane. It localises to the cytoplasm. The catalysed reaction is ATP + H2O + cellular proteinSide 1 = ADP + phosphate + cellular proteinSide 2.. Functionally, part of the Sec protein translocase complex. Interacts with the SecYEG preprotein conducting channel. Has a central role in coupling the hydrolysis of ATP to the transfer of proteins into and across the cell membrane, serving as an ATP-driven molecular motor driving the stepwise translocation of polypeptide chains across the membrane. This is Protein translocase subunit SecA from Desulforamulus reducens (strain ATCC BAA-1160 / DSM 100696 / MI-1) (Desulfotomaculum reducens).